Reading from the N-terminus, the 226-residue chain is Pyridoxal 5'-phosphate synthase subunit PdxT (226 aa).

60 to 62 serves as a coordination point for L-glutamine; sequence GES. The Nucleophile role is filled by cysteine 92. Residues arginine 121 and 150–151 each bind L-glutamine; that span reads IR. Active-site charge relay system residues include histidine 191 and glutamate 193.

It belongs to the glutaminase PdxT/SNO family. In the presence of PdxS, forms a dodecamer of heterodimers. Only shows activity in the heterodimer.

It catalyses the reaction aldehydo-D-ribose 5-phosphate + D-glyceraldehyde 3-phosphate + L-glutamine = pyridoxal 5'-phosphate + L-glutamate + phosphate + 3 H2O + H(+). It carries out the reaction L-glutamine + H2O = L-glutamate + NH4(+). The protein operates within cofactor biosynthesis; pyridoxal 5'-phosphate biosynthesis. Functionally, catalyzes the hydrolysis of glutamine to glutamate and ammonia as part of the biosynthesis of pyridoxal 5'-phosphate. The resulting ammonia molecule is channeled to the active site of PdxS. This chain is Pyridoxal 5'-phosphate synthase subunit PdxT, found in Nocardia farcinica (strain IFM 10152).